Here is a 642-residue protein sequence, read N- to C-terminus: Chaperone protein HtpG (642 aa).

The a; substrate-binding stretch occupies residues 1–349; the sequence is MSAATETEVR…SADLPLNVSR (349 aa). The tract at residues 216–238 is disordered; that stretch reads ELPPAPPAKEGEEPEPPKTPEWE. A compositionally biased stretch (basic and acidic residues) spans 224–236; the sequence is KEGEEPEPPKTPE. Positions 350–570 are b; that stretch reads EILQQNRQVE…AHDMSATLER (221 aa). Positions 571–642 are c; sequence LLKEAGQEVP…VKRLNKLLMG (72 aa).

This sequence belongs to the heat shock protein 90 family. Homodimer.

It localises to the cytoplasm. In terms of biological role, molecular chaperone. Has ATPase activity. The polypeptide is Chaperone protein HtpG (Magnetococcus marinus (strain ATCC BAA-1437 / JCM 17883 / MC-1)).